Reading from the N-terminus, the 709-residue chain is Solute carrier family 15 member 1 (709 aa).

The helical transmembrane segment at 1-21 (MGMSKSRGCFGYPLSIFFIVV) threads the bilayer. Residues 22–53 (NEFCERFSYYGMRALLVLYFRNFLGWDDNLST) are Extracellular-facing. N-linked (GlcNAc...) asparagine glycosylation occurs at Asn50. A helical transmembrane segment spans residues 54–74 (AIYHTFVALCYLTPILGALIA). Residues 75-82 (DSWLGKFK) lie on the Cytoplasmic side of the membrane. Residues 83 to 103 (TIVSLSIVYTIGQAVISVSSI) traverse the membrane as a helical segment. Residues 104–118 (NDLTDHDHNGSPDSL) are Extracellular-facing. A helical membrane pass occupies residues 119 to 139 (PVHVALSMVGLALIALGTGGI). The Cytoplasmic portion of the chain corresponds to 140–161 (KPCVSAFGGDQFEEGQEKQRNR). Residues 162–182 (FFSIFYLAINGGSLLSTIITP) traverse the membrane as a helical segment. The Extracellular segment spans residues 183-198 (ILRVQQCGIHSQQACY). A helical membrane pass occupies residues 199 to 219 (PLAFGVPAALMAVALIVFVLG). Over 220 to 276 (SGMYKKFQPQGNIMGKVAKCIGFAIKNRFRHRSKAYPKREHWLDWAKEKYDERLISQ) the chain is Cytoplasmic. The chain crosses the membrane as a helical span at residues 277 to 297 (IKMVTKVMFLYIPLPMFWALF). Residues 298–327 (DQQGSRWTLQATTMNGKIGAIEIQPDQMQT) lie on the Extracellular side of the membrane. A helical transmembrane segment spans residues 328–348 (VNAILIVIMVPIVDAVVYPLI). Topologically, residues 349–361 (AKCGFNFTSLKKM) are cytoplasmic. A helical membrane pass occupies residues 362–382 (TVGMFLASMAFVVAAIVQVEI). Topologically, residues 383–585 (DKTLPVFPGG…PPNTVNMALQ (203 aa)) are extracellular. The interval 383-585 (DKTLPVFPGG…PPNTVNMALQ (203 aa)) is extracellular domain (ECD). N-linked (GlcNAc...) asparagine glycans are attached at residues Asn406, Asn439, Asn515, and Asn532. The chain crosses the membrane as a helical span at residues 586–606 (IPQYFLLTCGEVVFSVTGLEF). Over 607-620 (SYSQAPSNMKSVLQ) the chain is Cytoplasmic. A helical transmembrane segment spans residues 621-641 (AGWLLTVAVGNIIVLIVAGAG). At 642 to 646 (HFPKQ) the chain is on the extracellular side. The helical transmembrane segment at 647–667 (WAEYILFASLLLVVCVIFAIM) threads the bilayer. Topologically, residues 668–709 (ARFYTYINPAEIEAQFDEDEKKKGIGKENPYSSLEPVSQTNM) are cytoplasmic. The disordered stretch occupies residues 690–709 (KGIGKENPYSSLEPVSQTNM). Polar residues predominate over residues 697-709 (PYSSLEPVSQTNM).

Belongs to the major facilitator superfamily. Proton-dependent oligopeptide transporter (POT/PTR) (TC 2.A.17) family. Interacts (via extracellular domain region) with trypsin.

The protein localises to the apical cell membrane. It catalyses the reaction a dipeptide(out) + H(+)(out) = a dipeptide(in) + H(+)(in). The enzyme catalyses an L-amino acid tripeptide(out) + H(+)(out) = an L-amino acid tripeptide(in) + H(+)(in). The catalysed reaction is L-alanyl-L-lysine(out) + H(+)(out) = L-alanyl-L-lysine(in) + H(+)(in). It carries out the reaction L-alanyl-L-proline(out) + H(+)(out) = L-alanyl-L-proline(in) + H(+)(in). It catalyses the reaction L-alanyl-L-valine(out) + H(+)(out) = L-alanyl-L-valine(in) + H(+)(in). The enzyme catalyses carnosine(out) + H(+)(out) = carnosine(in) + H(+)(in). The catalysed reaction is glycyl-L-glutamine(out) + H(+)(out) = glycyl-L-glutamine(in) + H(+)(in). It carries out the reaction glycyl-L-leucine(out) + H(+)(out) = glycyl-L-leucine(in) + H(+)(in). It catalyses the reaction glycyl-L-proline(out) + H(+)(out) = glycyl-L-proline(in) + H(+)(in). The enzyme catalyses glycyl-sarcosine(out) + H(+)(out) = glycyl-sarcosine(in) + H(+)(in). The catalysed reaction is L-leucyl-L-leucine(out) + H(+)(out) = L-leucyl-L-leucine(in) + H(+)(in). It carries out the reaction L-leucyl-L-proline(out) + H(+)(out) = L-leucyl-L-proline(in) + H(+)(in). It catalyses the reaction L-phenylalanyl-L-leucine(out) + H(+)(out) = L-phenylalanyl-L-leucine(in) + H(+)(in). The enzyme catalyses L-phenylalanyl-L-phenylalanine(out) + H(+)(out) = L-phenylalanyl-L-phenylalanine(in) + H(+)(in). The catalysed reaction is L-lysyl-glycine(out) + H(+)(out) = L-lysyl-glycine(in) + H(+)(in). It carries out the reaction L-tyrosylglycine(out) + H(+)(out) = L-tyrosylglycine(in) + H(+)(in). It catalyses the reaction L-alanyl-L-aspartate(out) + 2 H(+)(out) = L-alanyl-L-aspartate(in) + 2 H(+)(in). The enzyme catalyses L-aspartyl-glycine(out) + 2 H(+)(out) = L-aspartyl-glycine(in) + 2 H(+)(in). The catalysed reaction is glycyl-L-aspartate(out) + 2 H(+)(out) = glycyl-L-aspartate(in) + 2 H(+)(in). It carries out the reaction glycyl-L-glutamate(out) + 2 H(+)(out) = glycyl-L-glutamate(in) + 2 H(+)(in). It catalyses the reaction L-alanyl-L-leucyl-L-alanine(out) + H(+)(out) = L-alanyl-L-leucyl-L-alanine(in) + H(+)(in). The enzyme catalyses L-alanyl-L-prolylglycine(out) + H(+)(out) = L-alanyl-L-prolylglycine(in) + H(+)(in). The catalysed reaction is glycylglycyl-L-isoleucine(out) + H(+)(out) = glycylglycyl-L-isoleucine(in) + H(+)(in). It carries out the reaction glycylglycyl-L-proline(out) + H(+)(out) = glycylglycyl-L-proline(in) + H(+)(in). It catalyses the reaction L-methionyl-L-phenylalanyl-L-methionine(out) + H(+)(out) = L-methionyl-L-phenylalanyl-L-methionine(in) + H(+)(in). The enzyme catalyses N-acetyl-D-muramoyl-L-alanyl-D-isoglutamine(out) + 2 H(+)(out) = N-acetyl-D-muramoyl-L-alanyl-D-isoglutamine(in) + 2 H(+)(in). The catalysed reaction is N(alpha)-formyl-L-methionyl-L-leucyl-L-phenylalanine(out) + 2 H(+)(out) = N(alpha)-formyl-L-methionyl-L-leucyl-L-phenylalanine(in) + 2 H(+)(in). Electrogenic proton-coupled amino-acid transporter that transports oligopeptides of 2 to 4 amino acids with a preference for dipeptides. Transports neutral and monovalently charged peptides with a proton to peptide stoichiometry of 1:1 or 2:1. Primarily responsible for the absorption of dietary di- and tripeptides from the small intestinal lumen. Mediates transepithelial transport of muramyl and N-formylated bacterial dipeptides contributing to recognition of pathogenic bacteria by the mucosal immune system. The polypeptide is Solute carrier family 15 member 1 (Mus musculus (Mouse)).